The following is a 537-amino-acid chain: T-complex protein 1 subunit theta (537 aa).

It belongs to the TCP-1 chaperonin family. As to quaternary structure, heterooligomeric complex.

Its subcellular location is the cytoplasm. Molecular chaperone; assists the folding of proteins upon ATP hydrolysis. Known to play a role, in vitro, in the folding of actin and tubulin. The protein is T-complex protein 1 subunit theta (cct8) of Dictyostelium discoideum (Social amoeba).